We begin with the raw amino-acid sequence, 135 residues long: ATP synthase epsilon chain (135 aa).

This sequence belongs to the ATPase epsilon chain family. In terms of assembly, F-type ATPases have 2 components, CF(1) - the catalytic core - and CF(0) - the membrane proton channel. CF(1) has five subunits: alpha(3), beta(3), gamma(1), delta(1), epsilon(1). CF(0) has three main subunits: a, b and c.

Its subcellular location is the cell inner membrane. Functionally, produces ATP from ADP in the presence of a proton gradient across the membrane. This is ATP synthase epsilon chain from Brucella suis (strain ATCC 23445 / NCTC 10510).